A 541-amino-acid polypeptide reads, in one-letter code: DNA ligase 1 (541 aa).

Glutamate 234 contacts ATP. Catalysis depends on lysine 236, which acts as the N6-AMP-lysine intermediate. The ATP site is built by arginine 241, arginine 256, glutamate 286, phenylalanine 325, arginine 398, and lysine 404.

It belongs to the ATP-dependent DNA ligase family. Mg(2+) serves as cofactor.

The catalysed reaction is ATP + (deoxyribonucleotide)n-3'-hydroxyl + 5'-phospho-(deoxyribonucleotide)m = (deoxyribonucleotide)n+m + AMP + diphosphate.. DNA ligase that seals nicks in double-stranded DNA during DNA replication, DNA recombination and DNA repair. The sequence is that of DNA ligase 1 from Korarchaeum cryptofilum (strain OPF8).